The chain runs to 491 residues: Chromosomal replication initiator protein DnaA (491 aa).

Residues 1–69 (MTTWDKCLKK…TIQECHGNDL (69 aa)) are domain I, interacts with DnaA modulators. The domain II stretch occupies residues 69-154 (LIIEYSNKKF…KEDEEYSFGL (86 aa)). Positions 155 to 371 (PLKEKYVFDS…GALNRVLTTS (217 aa)) are domain III, AAA+ region. Positions 199, 201, 202, and 203 each coordinate ATP. A domain IV, binds dsDNA region spans residues 372–491 (KFNHKDPTIE…YELLLDKISR (120 aa)).

This sequence belongs to the DnaA family. In terms of assembly, oligomerizes as a right-handed, spiral filament on DNA at oriC.

The protein localises to the cytoplasm. Functionally, plays an essential role in the initiation and regulation of chromosomal replication. ATP-DnaA binds to the origin of replication (oriC) to initiate formation of the DNA replication initiation complex once per cell cycle. Binds the DnaA box (a 9 base pair repeat at the origin) and separates the double-stranded (ds)DNA. Forms a right-handed helical filament on oriC DNA; dsDNA binds to the exterior of the filament while single-stranded (ss)DNA is stabiized in the filament's interior. The ATP-DnaA-oriC complex binds and stabilizes one strand of the AT-rich DNA unwinding element (DUE), permitting loading of DNA polymerase. After initiation quickly degrades to an ADP-DnaA complex that is not apt for DNA replication. Binds acidic phospholipids. The chain is Chromosomal replication initiator protein DnaA from Francisella tularensis subsp. holarctica (strain OSU18).